Consider the following 409-residue polypeptide: Ribose-phosphate pyrophosphokinase 3, chloroplastic (409 aa).

Low complexity-rich tracts occupy residues 1–16 (MATA…PAAA) and 34–43 (PASAFARPSP). The disordered stretch occupies residues 1–43 (MATAASASASASPAAAFGAKTRRPGPSPSPSPSPASAFARPSP). A chloroplast-targeting transit peptide spans 1–44 (MATAASASASASPAAAFGAKTRRPGPSPSPSPSPASAFARPSPR). Mg(2+) is bound by residues Asp-229 and His-231. The interval 312–327 (GRHVVIVDDLVQSGGT) is binding of phosphoribosylpyrophosphate.

This sequence belongs to the ribose-phosphate pyrophosphokinase family. The cofactor is Mg(2+).

It localises to the plastid. Its subcellular location is the chloroplast. The enzyme catalyses D-ribose 5-phosphate + ATP = 5-phospho-alpha-D-ribose 1-diphosphate + AMP + H(+). The sequence is that of Ribose-phosphate pyrophosphokinase 3, chloroplastic from Oryza sativa subsp. japonica (Rice).